Reading from the N-terminus, the 3013-residue chain is DmX-like protein 1 (3013 aa).

WD repeat units follow at residues 108-145 (FLDS…TEDE), 164-204 (KTAS…RPAV), and 227-275 (AHPR…NDCF). 4 positions are modified to phosphoserine: Ser322, Ser420, Ser423, and Ser434. The tract at residues 418 to 442 (PSSEASVEDSIQADLKSDEELDDGV) is disordered. Residues 474–514 (DHQIEVLLSEWSKNADMLFSIHPMDGSLLVWHVDWLDEYQP) form a WD 4 repeat. Ser572 bears the Phosphoserine mark. WD repeat units follow at residues 578–619 (AHSK…ESAF) and 842–893 (KKRL…TPVS). A phosphoserine mark is found at Ser916 and Ser922. 3 WD repeats span residues 970–1008 (HLSS…GESA), 1145–1193 (EDGS…PLSK), and 1208–1248 (GAPP…EPVI). A phosphoserine mark is found at Ser1829, Ser1896, Ser1903, and Ser1965. 2 disordered regions span residues 2364-2406 (GQAN…PPAV) and 2431-2462 (QSRA…GLQL). Over residues 2385–2398 (SKVSARESPVSSSS) the composition is skewed to low complexity. Acidic residues predominate over residues 2437-2455 (DSEESLESDDEEEEDDDDA). WD repeat units follow at residues 2728 to 2769 (KAIN…TCFR), 2771 to 2810 (GGNS…CPVT), 2822 to 2864 (CHNK…ANSL), 2870 to 2909 (CHDS…QRQL), 2912 to 2951 (SHDS…LLHT), and 2964 to 3002 (NIGT…SPLN).

This Mus musculus (Mouse) protein is DmX-like protein 1 (Dmxl1).